The primary structure comprises 292 residues: 4-hydroxy-tetrahydrodipicolinate synthase 2 (292 aa).

Residue Thr46 participates in pyruvate binding. The active-site Proton donor/acceptor is the Tyr134. The active-site Schiff-base intermediate with substrate is Lys162. Val204 serves as a coordination point for pyruvate.

This sequence belongs to the DapA family. In terms of assembly, homotetramer; dimer of dimers.

Its subcellular location is the cytoplasm. The catalysed reaction is L-aspartate 4-semialdehyde + pyruvate = (2S,4S)-4-hydroxy-2,3,4,5-tetrahydrodipicolinate + H2O + H(+). Its pathway is amino-acid biosynthesis; L-lysine biosynthesis via DAP pathway; (S)-tetrahydrodipicolinate from L-aspartate: step 3/4. In terms of biological role, catalyzes the condensation of (S)-aspartate-beta-semialdehyde [(S)-ASA] and pyruvate to 4-hydroxy-tetrahydrodipicolinate (HTPA). This Halalkalibacterium halodurans (strain ATCC BAA-125 / DSM 18197 / FERM 7344 / JCM 9153 / C-125) (Bacillus halodurans) protein is 4-hydroxy-tetrahydrodipicolinate synthase 2.